Consider the following 1402-residue polypeptide: Roundabout homolog 3 (1402 aa).

The signal sequence occupies residues M1–A20. The Extracellular portion of the chain corresponds to R21 to P891. Residues N25, N34, and N53 are each glycosylated (N-linked (GlcNAc...) asparagine). Ig-like C2-type domains lie at P64–E160, D166–V253, P258–S342, P347–E440, and P450–T531. A disulfide bridge connects residues C85 and C143. Residue N156 is glycosylated (N-linked (GlcNAc...) asparagine). Cystine bridges form between C187/C236 and C279/C326. Residues N355, N363, N410, N459, and N503 are each glycosylated (N-linked (GlcNAc...) asparagine). An intrachain disulfide couples C368 to C424. A disulfide bond links C472 and C521. 2 disordered regions span residues E540–Q561 and E639–W662. Low complexity predominate over residues G543–P552. 3 consecutive Fibronectin type-III domains span residues P558–S652, A672–E766, and P771–A869. Residues P646 to S655 are compositionally biased toward polar residues. Residues N784, N813, and N820 are each glycosylated (N-linked (GlcNAc...) asparagine). A helical transmembrane segment spans residues A892–L912. At Y913 to R1402 the chain is on the cytoplasmic side. Disordered stretches follow at residues S965–P989, F1032–A1307, and G1340–R1402. Composition is skewed to polar residues over residues Q1038–Q1049 and P1142–S1152. Pro residues predominate over residues P1158–D1169. 2 stretches are compositionally biased toward low complexity: residues R1178–S1191 and A1215–P1228. Basic residues predominate over residues H1243 to K1254. S1263 is modified (phosphoserine). A compositionally biased stretch (basic and acidic residues) spans L1294–V1304. Residues S1346–A1357 show a composition bias toward polar residues. Residues G1358–S1371 are compositionally biased toward low complexity.

This sequence belongs to the immunoglobulin superfamily. ROBO family. Interacts (via Fibronectin type-III 1 domain) with NELL2 (via the EGF domains) with a 3:3 stoichiometry; this interaction promotes oligomerization of ROBO3 resulting in the repulsion of commissural axons in the midline. In terms of tissue distribution, detected in embryonal spinal cord and hindbrain.

The protein resides in the membrane. Its function is as follows. Receptor involved in axon guidance during development. Acts as a multifunctional regulator of pathfinding that simultaneously mediates NELL2 repulsion, inhibits SLIT repulsion, and facilitates Netrin-1/NTN1 attraction. In spinal cord development plays a role in guiding commissural axons probably by preventing premature sensitivity to Slit proteins thus inhibiting Slit signaling through ROBO1/ROBO2. Binding OF NELL2 to the receptor ROBO3 promotes oligomerization of ROBO3, resulting in the repulsion of commissural axons in the midline. ROBO3 also indirectly boosts axon attraction to NTN1 without interacting with NTN1 itself. In terms of biological role, mediates NELL2 premature repulsion of commissural axons during midline crossing. Functionally, after midline crossing by the commissural axons, may, in concert with ROBO1 and ROBO2, prevent midline recrossing. Does not mediate NELL2 signaling. The chain is Roundabout homolog 3 from Mus musculus (Mouse).